Reading from the N-terminus, the 323-residue chain is Beta-ketoacyl-[acyl-carrier-protein] synthase III (323 aa).

Catalysis depends on residues C113 and H250. The segment at 251–255 (QANKR) is ACP-binding. N280 is a catalytic residue.

Belongs to the thiolase-like superfamily. FabH family. As to quaternary structure, homodimer.

It is found in the cytoplasm. The catalysed reaction is malonyl-[ACP] + acetyl-CoA + H(+) = 3-oxobutanoyl-[ACP] + CO2 + CoA. It participates in lipid metabolism; fatty acid biosynthesis. Functionally, catalyzes the condensation reaction of fatty acid synthesis by the addition to an acyl acceptor of two carbons from malonyl-ACP. Catalyzes the first condensation reaction which initiates fatty acid synthesis and may therefore play a role in governing the total rate of fatty acid production. Possesses both acetoacetyl-ACP synthase and acetyl transacylase activities. Its substrate specificity determines the biosynthesis of branched-chain and/or straight-chain of fatty acids. The sequence is that of Beta-ketoacyl-[acyl-carrier-protein] synthase III from Brucella abortus biovar 1 (strain 9-941).